Consider the following 567-residue polypeptide: Urease subunit alpha (567 aa).

Residues G129–F567 enclose the Urease domain. Residues H134, H136, and K217 each coordinate Ni(2+). The residue at position 217 (K217) is an N6-carboxylysine. A substrate-binding site is contributed by H219. H246 and H272 together coordinate Ni(2+). The active-site Proton donor is the H320. D360 contacts Ni(2+).

It belongs to the metallo-dependent hydrolases superfamily. Urease alpha subunit family. As to quaternary structure, heterotrimer of UreA (gamma), UreB (beta) and UreC (alpha) subunits. Three heterotrimers associate to form the active enzyme. The cofactor is Ni cation. Carboxylation allows a single lysine to coordinate two nickel ions.

It is found in the cytoplasm. The enzyme catalyses urea + 2 H2O + H(+) = hydrogencarbonate + 2 NH4(+). It functions in the pathway nitrogen metabolism; urea degradation; CO(2) and NH(3) from urea (urease route): step 1/1. The polypeptide is Urease subunit alpha (Citrobacter koseri (strain ATCC BAA-895 / CDC 4225-83 / SGSC4696)).